Here is a 510-residue protein sequence, read N- to C-terminus: MMKGNKILYILGTGIFVGSSCLFSSLFVAAEEQVYSESEVSTVLSKLEKEAISEAAAEQYTVVDRKEDAWGMKHLKLEKQTEGVTVDSDNVIIHLDRNGAVTSVTGNPVDQVVKIQSVDAIGEEGVKKIIASDNPETKDLVFLAIDKRVNNEGQLFYKVRVTSSPTGDPVSLVYKVNATDGTIMEKQDLTEHVGSEVTLKNSFQVAFNVPVEKSNTGIALHGTDNTGVYHAVVDGKNNYSIIQAPSLVALNQNAVDAYTHGKFVKTYYEDHFQRHSIDDRGMPILSVVDEQHPDAYDNAFWDGKAMRYGETSTPTGKTYASSLDVVGHEMTHGVTEHTAGLEYLGQSGALNESYSDLMGYIISGASNPEIGADTQSVDRKTGIRNLQTPSKHGQPETMAQYDDRARYKGTPYYDQGGVHYNSGIINRIGYTIIQNLGIEKAQTIFYSSLVNYLTPKAQFSDARDAMLAAAKVQYGDEAASVVSAAFNSAGIGAKEDIQVNQPSESVLVNE.

The N-terminal stretch at 1–30 (MMKGNKILYILGTGIFVGSSCLFSSLFVAA) is a signal peptide. Residues 31-192 (EEQVYSESEV…IMEKQDLTEH (162 aa)) constitute a propeptide that is removed on maturation. Asp324 provides a ligand contact to Ca(2+). Residue His328 coordinates Zn(2+). The active site involves Glu329. Positions 332 and 352 each coordinate Zn(2+). Ser376 provides a ligand contact to Ca(2+). The Proton donor role is filled by His419.

The protein belongs to the peptidase M4 family.

Its subcellular location is the secreted. It catalyses the reaction Preferential cleavage: Xaa-|-Leu, Xaa-|-Phe, Xaa-|-Tyr, Xaa-|-Ala.. Inhibited by L-leucine hydroxamate and phosphoramidon. Not inhibited by phenylmethanesulfonyl fluoride. Reversibly inactivated by straight-chain aliphatic alcohols. Its function is as follows. Metalloprotease capable of the hydrolysis of insoluble hydrophobic substrates. Hydrolyzes azocoll and gelatin and, at a lower rate, soluble and insoluble collagens. Does not cleave short synthetic peptides. Preferentially hydrolyzes the 24-Phe-|-Phe-25 bond in the insulin B-chain, followed by the 5-His-|-Leu-6 bond. Inactivates endothelin-1, primarily by cleavage of the 5-Ser-|-Leu-6 and 16-His-|-Leu-17 bonds. Hydrolyzes the alpha chain of C3 to generate a C3b-like protein. Inhibits complement-mediated hemolysis and opsinization of bacteria. Hydrolyzes the insect antimicrobial peptide cecropin. Decreases the length of E.faecalis chains via the activation of autolysin. Degrades polymerized fibrin. The polypeptide is Gelatinase (Enterococcus faecalis (strain ATCC 700802 / V583)).